Here is a 156-residue protein sequence, read N- to C-terminus: Small ribosomal subunit protein uS7 (156 aa).

It belongs to the universal ribosomal protein uS7 family. Part of the 30S ribosomal subunit. Contacts proteins S9 and S11.

One of the primary rRNA binding proteins, it binds directly to 16S rRNA where it nucleates assembly of the head domain of the 30S subunit. Is located at the subunit interface close to the decoding center, probably blocks exit of the E-site tRNA. This chain is Small ribosomal subunit protein uS7, found in Desulforudis audaxviator (strain MP104C).